A 153-amino-acid polypeptide reads, in one-letter code: Ribonuclease H (153 aa).

Residues 1 to 141 form the RNase H type-1 domain; that stretch reads MKHVHIFTDG…ADELARKGME (141 aa). Mg(2+) contacts are provided by D9, E47, D69, and D133. Residues 123 to 153 form a disordered region; that stretch reads HAGHPENERADELARKGMEPFKKARRADAVK. Residues 125–153 are compositionally biased toward basic and acidic residues; sequence GHPENERADELARKGMEPFKKARRADAVK.

This sequence belongs to the RNase H family. As to quaternary structure, monomer. Mg(2+) serves as cofactor.

The protein localises to the cytoplasm. The enzyme catalyses Endonucleolytic cleavage to 5'-phosphomonoester.. Its function is as follows. Endonuclease that specifically degrades the RNA of RNA-DNA hybrids. The polypeptide is Ribonuclease H (Rhizobium meliloti (strain 1021) (Ensifer meliloti)).